A 685-amino-acid chain; its full sequence is Tyrosinase (685 aa).

Position 2 is an N-acetylserine (Ser-2). Cu cation-binding residues include His-67, His-97, His-106, His-278, His-282, and His-307. A cross-link (2'-(S-cysteinyl)-histidine (Cys-His)) is located at residues 95–97 (CTH). Positions 409-685 (ANFVENVADR…PCGHGPEDHI (277 aa)) are cleaved as a propeptide — could be involved in enzyme activation.

This sequence belongs to the tyrosinase family. Requires Cu(2+) as cofactor.

The enzyme catalyses 2 L-dopa + O2 = 2 L-dopaquinone + 2 H2O. It catalyses the reaction L-tyrosine + O2 = L-dopaquinone + H2O. Its function is as follows. This is a copper-containing oxidase that functions in the formation of pigments such as melanins and other polyphenolic compounds. The polypeptide is Tyrosinase (T) (Neurospora crassa (strain ATCC 24698 / 74-OR23-1A / CBS 708.71 / DSM 1257 / FGSC 987)).